A 585-amino-acid polypeptide reads, in one-letter code: Arginine--tRNA ligase (585 aa).

A 'HIGH' region motif is present at residues Ala131–His141.

This sequence belongs to the class-I aminoacyl-tRNA synthetase family. Monomer.

It localises to the cytoplasm. It catalyses the reaction tRNA(Arg) + L-arginine + ATP = L-arginyl-tRNA(Arg) + AMP + diphosphate. The polypeptide is Arginine--tRNA ligase (Rhizobium etli (strain ATCC 51251 / DSM 11541 / JCM 21823 / NBRC 15573 / CFN 42)).